A 631-amino-acid polypeptide reads, in one-letter code: Phosphomethylpyrimidine synthase (631 aa).

Substrate contacts are provided by residues Asn239, Met268, Tyr297, His333, 353-355, 394-397, and Glu433; these read SRG and DGLR. His437 lines the Zn(2+) pocket. Residue Tyr460 coordinates substrate. Zn(2+) is bound at residue His501. Positions 581, 584, and 589 each coordinate [4Fe-4S] cluster.

Belongs to the ThiC family. Homodimer. [4Fe-4S] cluster serves as cofactor.

It carries out the reaction 5-amino-1-(5-phospho-beta-D-ribosyl)imidazole + S-adenosyl-L-methionine = 4-amino-2-methyl-5-(phosphooxymethyl)pyrimidine + CO + 5'-deoxyadenosine + formate + L-methionine + 3 H(+). Its pathway is cofactor biosynthesis; thiamine diphosphate biosynthesis. Functionally, catalyzes the synthesis of the hydroxymethylpyrimidine phosphate (HMP-P) moiety of thiamine from aminoimidazole ribotide (AIR) in a radical S-adenosyl-L-methionine (SAM)-dependent reaction. This is Phosphomethylpyrimidine synthase from Shigella flexneri serotype 5b (strain 8401).